The primary structure comprises 496 residues: Stomatal closure-related actin-binding protein 1 (496 aa).

Residues 126–269 (RNKDDVEEAI…FLQLQKKLAM (144 aa)) adopt a coiled-coil conformation.

This sequence belongs to the SCAB family. Dimer. Dimerization is required for actin-binding activity. As to expression, expressed in roots, stems, leaves, flowers, siliques and guard cells.

The protein localises to the cytoplasm. It localises to the cytoskeleton. In terms of biological role, plant-specific actin binding protein that bundles and stabilizes microfilaments (MFs). Has no nucleation or capping activity. Regulates MF reorganization during stomatal closure. The binding to F-actin is insensitive to Ca(2+) and pH. Binds weakly to inositol phosphates. This is Stomatal closure-related actin-binding protein 1 from Arabidopsis thaliana (Mouse-ear cress).